The chain runs to 210 residues: ATP phosphoribosyltransferase (210 aa).

The protein belongs to the ATP phosphoribosyltransferase family. Short subfamily. Heteromultimer composed of HisG and HisZ subunits.

The protein resides in the cytoplasm. The enzyme catalyses 1-(5-phospho-beta-D-ribosyl)-ATP + diphosphate = 5-phospho-alpha-D-ribose 1-diphosphate + ATP. Its pathway is amino-acid biosynthesis; L-histidine biosynthesis; L-histidine from 5-phospho-alpha-D-ribose 1-diphosphate: step 1/9. Functionally, catalyzes the condensation of ATP and 5-phosphoribose 1-diphosphate to form N'-(5'-phosphoribosyl)-ATP (PR-ATP). Has a crucial role in the pathway because the rate of histidine biosynthesis seems to be controlled primarily by regulation of HisG enzymatic activity. This Synechocystis sp. (strain ATCC 27184 / PCC 6803 / Kazusa) protein is ATP phosphoribosyltransferase (hisG).